Reading from the N-terminus, the 778-residue chain is Hyaluronate lyase (778 aa).

A signal peptide (tat-type signal) is located at residues 1–33 (MSWNRRSFLGALGVTCLAGAGMVPIVRPRTAAA). Active-site residues include N200, H250, and Y259.

It belongs to the polysaccharide lyase 8 family. Post-translationally, predicted to be exported by the Tat system. The position of the signal peptide cleavage has not been experimentally proven.

It catalyses the reaction [hyaluronan](n) = n 3-(4-deoxy-beta-D-gluc-4-enuronosyl)-N-acetyl-D-glucosamine + H2O. With respect to regulation, is salt-dependent and is active over a wide range of NaCl concentrations. Activity is slightly promoted by Ni(2+), and inhibited by most of the tested metal ions, including Li(+), K(+), Ba(2+), Mg(2+), Zn(2+), Ca(2+), Mn(2+) and Al(3+). In terms of biological role, degrades hyaluronic acid into unsaturated disaccharides as the end products. Exhibits very low activity against various types of chondroitin sulfate variants. This Thermasporomyces composti protein is Hyaluronate lyase.